Reading from the N-terminus, the 486-residue chain is UDP-N-acetylmuramate--L-alanine ligase (486 aa).

An ATP-binding site is contributed by glycine 132 to threonine 138.

This sequence belongs to the MurCDEF family.

The protein resides in the cytoplasm. The enzyme catalyses UDP-N-acetyl-alpha-D-muramate + L-alanine + ATP = UDP-N-acetyl-alpha-D-muramoyl-L-alanine + ADP + phosphate + H(+). It participates in cell wall biogenesis; peptidoglycan biosynthesis. Functionally, cell wall formation. The polypeptide is UDP-N-acetylmuramate--L-alanine ligase (Halorhodospira halophila (strain DSM 244 / SL1) (Ectothiorhodospira halophila (strain DSM 244 / SL1))).